The primary structure comprises 344 residues: S-adenosylmethionine:tRNA ribosyltransferase-isomerase (344 aa).

Belongs to the QueA family. In terms of assembly, monomer.

It localises to the cytoplasm. It catalyses the reaction 7-aminomethyl-7-carbaguanosine(34) in tRNA + S-adenosyl-L-methionine = epoxyqueuosine(34) in tRNA + adenine + L-methionine + 2 H(+). It participates in tRNA modification; tRNA-queuosine biosynthesis. Transfers and isomerizes the ribose moiety from AdoMet to the 7-aminomethyl group of 7-deazaguanine (preQ1-tRNA) to give epoxyqueuosine (oQ-tRNA). In Lactiplantibacillus plantarum (strain ATCC BAA-793 / NCIMB 8826 / WCFS1) (Lactobacillus plantarum), this protein is S-adenosylmethionine:tRNA ribosyltransferase-isomerase.